The following is a 120-amino-acid chain: Ribonuclease P protein component (120 aa).

The protein belongs to the RnpA family. As to quaternary structure, consists of a catalytic RNA component (M1 or rnpB) and a protein subunit.

It carries out the reaction Endonucleolytic cleavage of RNA, removing 5'-extranucleotides from tRNA precursor.. Functionally, RNaseP catalyzes the removal of the 5'-leader sequence from pre-tRNA to produce the mature 5'-terminus. It can also cleave other RNA substrates such as 4.5S RNA. The protein component plays an auxiliary but essential role in vivo by binding to the 5'-leader sequence and broadening the substrate specificity of the ribozyme. The polypeptide is Ribonuclease P protein component (Chelativorans sp. (strain BNC1)).